The following is a 115-amino-acid chain: U3-lycotoxin-Ls1a (115 aa).

Residues 1–20 (MKFVLLFGVLLVTLFSYSSA) form the signal peptide. Residues 21–44 (EMLDDFDQAVEDELLSLIEKEEAR) constitute a propeptide that is removed on maturation. Cystine bridges form between Cys-48/Cys-63, Cys-55/Cys-72, Cys-62/Cys-87, and Cys-74/Cys-85.

Belongs to the neurotoxin 19 (CSTX) family. 01 subfamily. In terms of tissue distribution, expressed by the venom gland.

The protein resides in the secreted. The polypeptide is U3-lycotoxin-Ls1a (Lycosa singoriensis (Wolf spider)).